The sequence spans 394 residues: MGGAAARLGAVILFVVIVGLHGVRGKYALADASLKMADPNRFRGKDLPVPDRLTDPPGVRRVYHIQAGLPDPFQPPSLPITVYYAVLERACRSVLLNAPSEAPQIVRGGSEDVRKQPYNLTIAWFRMGGNCAIPITVMEYTECSYNKSLGACPIRTQPRWNYYDSFSAVSEDNLGFLMHAPAFETAGTYLRLVKINDWTEITQFILEHRAKGSCKYALPLRIPPSACLSPQAYQQGVTVDSIGMLPRFIPENQRIVAVYSLKIAGWHGPKAPYTSTLLPPELSETPNATQPELAPEDPEDSALLEDPVGTVAPQIPPNWHIPSIQDAATPYHPPATPNNMGLIAGAVGGSLLAALVICGIVYWMRRRTQKGPKRIRLPHIREDDQPSSHQPLFY.

The N-terminal stretch at methionine 1–glycine 25 is a signal peptide. Positions glycine 25 to proline 57 are interaction with TNFRSF14. The Virion surface segment spans residues lysine 26–asparagine 339. Histidine 64 is a binding site for Zn(2+). 3 disulfides stabilise this stretch: cysteine 91–cysteine 214, cysteine 131–cysteine 227, and cysteine 143–cysteine 152. N-linked (GlcNAc...) asparagine; by host glycosylation is found at asparagine 119 and asparagine 146. Aspartate 240 is a binding site for Zn(2+). The interval leucine 261–glutamate 305 is profusion. Residues serine 275 to serine 301 form a disordered region. An N-linked (GlcNAc...) asparagine; by host glycan is attached at asparagine 287. A helical transmembrane segment spans residues methionine 340–methionine 364. Topologically, residues arginine 365 to tyrosine 394 are intravirion. Positions arginine 374–tyrosine 394 are disordered.

It belongs to the herpesviridae glycoprotein D family. Homodimer. Interacts with host receptor TNFRSF14. Interacts with host receptor NECTIN1. Interacts (via profusion domain) with gB; this interaction occurs in the absence of gH/gL. Interacts (via profusion domain) with gH/gL heterodimer; this interaction occurs in the absence of gB. Associates with the gB-gH/gL-gD complex. Interacts (via C-terminus) with UL11 tegument protein. Interacts with host RSAD2.

The protein localises to the virion membrane. Its subcellular location is the host Golgi apparatus. Its function is as follows. Envelope glycoprotein that binds to the host cell entry receptors NECTIN1, TNFRSF14/HVEM and 3-O-sulfated heparan sulfate, promoting the virus entry into host cells. May trigger fusion with host membrane, by recruiting the fusion machinery composed of gB and gH/gL. This is Envelope glycoprotein D (gD) from Homo sapiens (Human).